The chain runs to 25 residues: Cysteine protease inhibitor 2 (25 aa).

This sequence belongs to the protease inhibitor I3 (leguminous Kunitz-type inhibitor) family. In terms of tissue distribution, cortex of tuber.

Inhibitor of subtilisin. Inhibits moderately trypsin and chymotrypsin (serine proteases). May protect the plant by inhibiting proteases of invading organisms. The chain is Cysteine protease inhibitor 2 from Solanum tuberosum (Potato).